Here is a 251-residue protein sequence, read N- to C-terminus: Pyridoxine 5'-phosphate synthase (251 aa).

3-amino-2-oxopropyl phosphate is bound at residue Asn-7. Residue 9–10 participates in 1-deoxy-D-xylulose 5-phosphate binding; it reads DH. Arg-18 contributes to the 3-amino-2-oxopropyl phosphate binding site. The active-site Proton acceptor is the His-43. 1-deoxy-D-xylulose 5-phosphate contacts are provided by Arg-45 and His-50. Residue Glu-70 is the Proton acceptor of the active site. Thr-100 contributes to the 1-deoxy-D-xylulose 5-phosphate binding site. His-198 acts as the Proton donor in catalysis. Residues Ala-199 and 220–221 contribute to the 3-amino-2-oxopropyl phosphate site; that span reads GH.

The protein belongs to the PNP synthase family. In terms of assembly, homooctamer; tetramer of dimers.

Its subcellular location is the cytoplasm. It catalyses the reaction 3-amino-2-oxopropyl phosphate + 1-deoxy-D-xylulose 5-phosphate = pyridoxine 5'-phosphate + phosphate + 2 H2O + H(+). The protein operates within cofactor biosynthesis; pyridoxine 5'-phosphate biosynthesis; pyridoxine 5'-phosphate from D-erythrose 4-phosphate: step 5/5. Its function is as follows. Catalyzes the complicated ring closure reaction between the two acyclic compounds 1-deoxy-D-xylulose-5-phosphate (DXP) and 3-amino-2-oxopropyl phosphate (1-amino-acetone-3-phosphate or AAP) to form pyridoxine 5'-phosphate (PNP) and inorganic phosphate. This chain is Pyridoxine 5'-phosphate synthase, found in Aromatoleum aromaticum (strain DSM 19018 / LMG 30748 / EbN1) (Azoarcus sp. (strain EbN1)).